A 281-amino-acid chain; its full sequence is Hepatitis A virus cellular receptor 2 homolog (281 aa).

The N-terminal stretch at 1–19 is a signal peptide; it reads MFSGLTLNCVLLLLQLLLA. In terms of domain architecture, Ig-like V-type spans 20-125; that stretch reads RSLENAYVFE…PGLMNDKKLE (106 aa). Residues 20–193 are Extracellular-facing; sequence RSLENAYVFE…KDSGETIRTA (174 aa). Intrachain disulfides connect Cys38/Cys111, Cys52/Cys63, and Cys58/Cys110. A 1,2-diacyl-sn-glycero-3-phospho-L-serine-binding residues include Ser61 and Gln62. N-linked (GlcNAc...) asparagine glycosylation is found at Asn74 and Asn100. An a 1,2-diacyl-sn-glycero-3-phospho-L-serine-binding site is contributed by Arg112. 2 residues coordinate Ca(2+): Phe115 and Gly117. Met119 contacts a 1,2-diacyl-sn-glycero-3-phospho-L-serine. A Ca(2+)-binding site is contributed by Asn120. The interval 139–160 is disordered; the sequence is QTAHGDSTTASPRTLTTERNGS. An O-linked (GalNAc...) threonine glycan is attached at Thr146. Residue Asn172 is glycosylated (N-linked (GlcNAc...) asparagine). The chain crosses the membrane as a helical span at residues 194 to 214; that stretch reads IHIGVGVSAGLTLALIIGVLI. At 215–281 the chain is on the cytoplasmic side; sequence LKWYSCKKKK…YCYVNSQQPS (67 aa). Residues 252–270 are interaction with BAG6; the sequence is EENIYTIEENVYEVENSNE. Position 256 is a phosphotyrosine; by ITK (Tyr256).

It belongs to the immunoglobulin superfamily. TIM family. In terms of assembly, interacts with HMGB1; impairs HMGB1 binding to B-DNA and likely HMGB1-mediated innate immune response. Interacts with BAG6. Interacts (phosphorylated) with PIK3R1 and PIK3R2. Interacts (not dependent on its phosphorylation status) with FYN. Interacts (in basal state T-cells) with VAV1; AKT1/2, LCP2, ZAP70, SYK, PIK3R1, FYN, SH3BP2 and SH2D2A. Interacts (in activated T-cells) with LCK and PLCG. Interacts with ILF3; this interaction promotes ILF3 ubiquitination and degradation. In terms of processing, phosphorylated on tyrosine residues; modestly increased after TCR/CD28 stimulation. Can be phosphorylated in the cytoplasmic domain by FYN. Phosphorylation at Tyr-256 is increased by stimulation with ligand LGALS9. Post-translationally, N-glycosylated. As to expression, expressed in T-helper type 1 lymphocytes. Not expressed by naive T-cells but up-regulated as they differentiate into T-helper-1 cells. Also expressed by differentiated type 1 CD8+ cytotoxic T-cells. Expressed on peritoneal exudate macrophages, monocytes, and splenic dendritic cells (DCs). Expression on natural killer (NK) cells is inversely associated with IFN-gamma production during the initial 24 hours of LPS-induced endotoxic shock. Expressed on mast cells.

Its subcellular location is the membrane. It localises to the cell junction. It is found in the secreted. Functionally, cell surface receptor implicated in modulating innate and adaptive immune responses. Generally accepted to have an inhibiting function. Reports on stimulating functions suggest that the activity may be influenced by the cellular context and/or the respective ligand. Regulates macrophage activation. Inhibits T-helper type 1 lymphocyte (Th1)-mediated auto- and alloimmune responses and promotes immunological tolerance. In CD8+ cells attenuates TCR-induced signaling, specifically by blocking NF-kappaB and NFAT promoter activities resulting in the loss of IL-2 secretion. The function may implicate its association with LCK proposed to impair phosphorylation of TCR subunits. In contrast, shown to activate TCR-induced signaling in T-cells probably implicating ZAP70, LCP2, LCK and FYN. Expressed on Treg cells can inhibit Th17 cell responses. Receptor for LGALS9. Binding to LGALS9 is believed to result in suppression of T-cell responses; the resulting apoptosis of antigen-specific cells may implicate HAVCR2 phosphorylation and disruption of its association with BAG6. Binding to LGALS9 is proposed to be involved in innate immune response to intracellular pathogens. Expressed on Th1 cells interacts with LGALS9 expressed on Mycobacterium tuberculosis-infected macrophages to stimulate antibactericidal activity including IL-1 beta secretion and to restrict intracellular bacterial growth. However, the function as receptor for LGALS9 has been challenged. Also reported to enhance CD8+ T-cell responses to an acute infection such as by Listeria monocytogenes. Receptor for phosphatidylserine (PtSer); PtSer-binding is calcium-dependent. May recognize PtSer on apoptotic cells leading to their phagocytosis. Mediates the engulfment of apoptotic cells by dendritic cells. Expressed on T-cells, promotes conjugation but not engulfment of apoptotic cells. Expressed on dendritic cells (DCs) positively regulates innate immune response and in synergy with Toll-like receptors promotes secretion of TNF-alpha. In tumor-imfiltrating DCs suppresses nucleic acid-mediated innate immune repsonse by interaction with HMGB1 and interfering with nucleic acid-sensing and trafficking of nucleid acids to endosomes. Can enhance mast cell production of Th2 cytokines Il-4, IL-6 and IL-13. Expressed on natural killer (NK) cells acts as a coreceptor to enhance IFN-gamma production in response to LGALS9. In contrast, shown to suppress NK cell-mediated cytotoxicity. Negatively regulates NK cell function in LPS-induced endotoxic shock. This chain is Hepatitis A virus cellular receptor 2 homolog (Havcr2), found in Mus musculus (Mouse).